A 971-amino-acid polypeptide reads, in one-letter code: Serine/threonine-protein kinase CLA4 (971 aa).

The interval Met-1–Leu-40 is disordered. The span at Ala-23–Ser-37 shows a compositional bias: gly residues. One can recognise a PH domain in the interval Ser-67–Pro-178. The segment at Leu-201–Ser-221 is disordered. The 14-residue stretch at Val-231–Gly-244 folds into the CRIB domain. Disordered regions lie at residues Gly-292–Pro-517 and Ser-554–Lys-653. 2 stretches are compositionally biased toward low complexity: residues Asn-307–Asn-326 and Leu-365–Asn-404. Over residues Ser-423 to Lys-433 the composition is skewed to polar residues. Residues Asn-434–Arg-448 are compositionally biased toward basic and acidic residues. Residues Thr-449–Gln-482 are compositionally biased toward low complexity. Over residues Gln-491–Gly-500 the composition is skewed to pro residues. Over residues Ser-554–Pro-578 the composition is skewed to low complexity. Polar residues predominate over residues Asn-617 to Asp-630. The 256-residue stretch at Phe-680 to Ile-935 folds into the Protein kinase domain. ATP is bound by residues Ala-686–Val-694 and Lys-710. Asp-803 functions as the Proton acceptor in the catalytic mechanism.

The protein belongs to the protein kinase superfamily. STE Ser/Thr protein kinase family. STE20 subfamily.

It carries out the reaction L-seryl-[protein] + ATP = O-phospho-L-seryl-[protein] + ADP + H(+). It catalyses the reaction L-threonyl-[protein] + ATP = O-phospho-L-threonyl-[protein] + ADP + H(+). Functionally, essential for virulence and morphological switching (hyphal formation) of C.albicans. The chain is Serine/threonine-protein kinase CLA4 (CLA4) from Candida albicans (Yeast).